Consider the following 300-residue polypeptide: ETS homologous factor (300 aa).

The PNT domain maps to 29-115 (STCNVSSGFF…SNLQHLKWNG (87 aa)). The disordered stretch occupies residues 183–202 (ESPDMKKEQDPPAKCHTKKH). Residues 185-195 (PDMKKEQDPPA) show a composition bias toward basic and acidic residues. The segment at residues 207 to 289 (THLWEFIRDI…DGRRLVYKFG (83 aa)) is a DNA-binding region (ETS).

Belongs to the ETS family.

It is found in the nucleus. Its function is as follows. Transcriptional activator that may play a role in regulating epithelial cell differentiation and proliferation. May act as a repressor for a specific subset of ETS/AP-1-responsive genes, and as a modulator of the nuclear response to mitogen-activated protein kinase signaling cascades. Binds to DNA sequences containing the consensus nucleotide core sequence GGAA. Involved in regulation of TNFRSF10B/DR5 expression through Ets-binding sequences on the TNFRSF10B/DR5 promoter. The sequence is that of ETS homologous factor (EHF) from Pan troglodytes (Chimpanzee).